Reading from the N-terminus, the 279-residue chain is 3-methyl-2-oxobutanoate hydroxymethyltransferase (279 aa).

Positions 43 and 82 each coordinate Mg(2+). 3-methyl-2-oxobutanoate-binding positions include 43–44, aspartate 82, and lysine 112; that span reads DS. Glutamate 114 provides a ligand contact to Mg(2+). Glutamate 181 acts as the Proton acceptor in catalysis.

It belongs to the PanB family. As to quaternary structure, homodecamer; pentamer of dimers. The cofactor is Mg(2+).

It localises to the cytoplasm. It carries out the reaction 3-methyl-2-oxobutanoate + (6R)-5,10-methylene-5,6,7,8-tetrahydrofolate + H2O = 2-dehydropantoate + (6S)-5,6,7,8-tetrahydrofolate. Its pathway is cofactor biosynthesis; (R)-pantothenate biosynthesis; (R)-pantoate from 3-methyl-2-oxobutanoate: step 1/2. Catalyzes the reversible reaction in which hydroxymethyl group from 5,10-methylenetetrahydrofolate is transferred onto alpha-ketoisovalerate to form ketopantoate. The polypeptide is 3-methyl-2-oxobutanoate hydroxymethyltransferase (Bacillus anthracis (strain A0248)).